The chain runs to 160 residues: uncharacterized protein (160 aa).

This is an uncharacterized protein from Lactobacillus helveticus (Lactobacillus suntoryeus).